Reading from the N-terminus, the 388-residue chain is Cytochrome b (388 aa).

A run of 4 helical transmembrane segments spans residues 38 to 58 (FGCL…FLAM), 82 to 104 (WLLR…LHIF), 119 to 139 (VWCL…IGYV), and 185 to 205 (FFSL…LHLA). Residues H88 and H102 each contribute to the heme b site. H189 and H203 together coordinate heme b. H208 is an a ubiquinone binding site. 4 helical membrane passes run 231 to 251 (FYVK…IWIF), 295 to 315 (AGGV…PFFK), 327 to 347 (IHQG…WIGC), and 354 to 373 (FVTI…AITP).

The protein belongs to the cytochrome b family. The main subunits of complex b-c1 are: cytochrome b, cytochrome c1 and the Rieske protein. Heme b is required as a cofactor.

Its subcellular location is the mitochondrion inner membrane. Component of the ubiquinol-cytochrome c reductase complex (complex III or cytochrome b-c1 complex) that is part of the mitochondrial respiratory chain. The b-c1 complex mediates electron transfer from ubiquinol to cytochrome c. Contributes to the generation of a proton gradient across the mitochondrial membrane that is then used for ATP synthesis. The sequence is that of Cytochrome b (MT-CYB) from Zea mays (Maize).